The sequence spans 218 residues: Ribosome maturation factor RimM (218 aa).

Residues 141 to 214 enclose the PRC barrel domain; the sequence is GELWWDRDLV…HIVVDPPPGL (74 aa).

This sequence belongs to the RimM family. In terms of assembly, binds ribosomal protein uS19.

The protein localises to the cytoplasm. An accessory protein needed during the final step in the assembly of 30S ribosomal subunit, possibly for assembly of the head region. Essential for efficient processing of 16S rRNA. May be needed both before and after RbfA during the maturation of 16S rRNA. It has affinity for free ribosomal 30S subunits but not for 70S ribosomes. The sequence is that of Ribosome maturation factor RimM from Parafrankia sp. (strain EAN1pec).